The chain runs to 360 residues: 3-dehydroquinate synthase (360 aa).

NAD(+) contacts are provided by residues 71 to 76 (DGEQYK), 105 to 109 (GVIGD), 129 to 130 (TT), lysine 142, lysine 151, and 169 to 172 (CLDT). Zn(2+)-binding residues include glutamate 184, histidine 247, and histidine 264.

This sequence belongs to the sugar phosphate cyclases superfamily. Dehydroquinate synthase family. The cofactor is Co(2+). Zn(2+) serves as cofactor. NAD(+) is required as a cofactor.

The protein resides in the cytoplasm. The catalysed reaction is 7-phospho-2-dehydro-3-deoxy-D-arabino-heptonate = 3-dehydroquinate + phosphate. It functions in the pathway metabolic intermediate biosynthesis; chorismate biosynthesis; chorismate from D-erythrose 4-phosphate and phosphoenolpyruvate: step 2/7. Functionally, catalyzes the conversion of 3-deoxy-D-arabino-heptulosonate 7-phosphate (DAHP) to dehydroquinate (DHQ). The polypeptide is 3-dehydroquinate synthase (Erwinia tasmaniensis (strain DSM 17950 / CFBP 7177 / CIP 109463 / NCPPB 4357 / Et1/99)).